A 155-amino-acid polypeptide reads, in one-letter code: Ribosomal RNA large subunit methyltransferase H (155 aa).

S-adenosyl-L-methionine-binding positions include L73, G104, and 123–128; that span reads ISKMTF.

It belongs to the RNA methyltransferase RlmH family. As to quaternary structure, homodimer.

It localises to the cytoplasm. The enzyme catalyses pseudouridine(1915) in 23S rRNA + S-adenosyl-L-methionine = N(3)-methylpseudouridine(1915) in 23S rRNA + S-adenosyl-L-homocysteine + H(+). In terms of biological role, specifically methylates the pseudouridine at position 1915 (m3Psi1915) in 23S rRNA. This is Ribosomal RNA large subunit methyltransferase H from Francisella tularensis subsp. novicida (strain U112).